A 298-amino-acid polypeptide reads, in one-letter code: GTPase Era (298 aa).

An Era-type G domain is found at 3 to 170 (KSGFVAILGR…VQLLKDNLEE (168 aa)). The G1 stretch occupies residues 11-18 (GRPNVGKS). Position 11–18 (11–18 (GRPNVGKS)) interacts with GTP. The segment at 37 to 41 (QTTRN) is G2. Positions 58–61 (DTPG) are G3. GTP contacts are provided by residues 58-62 (DTPGI) and 120-123 (NKID). Residues 120-123 (NKID) form a G4 region. The tract at residues 149–151 (ISA) is G5. The KH type-2 domain occupies 201-279 (TQQEVPHSVA…YLETWVKVKK (79 aa)).

It belongs to the TRAFAC class TrmE-Era-EngA-EngB-Septin-like GTPase superfamily. Era GTPase family. Monomer.

It is found in the cytoplasm. The protein localises to the cell membrane. Its function is as follows. An essential GTPase that binds both GDP and GTP, with rapid nucleotide exchange. Plays a role in 16S rRNA processing and 30S ribosomal subunit biogenesis and possibly also in cell cycle regulation and energy metabolism. The polypeptide is GTPase Era (Streptococcus equi subsp. zooepidemicus (strain MGCS10565)).